A 227-amino-acid chain; its full sequence is Floral homeotic protein DEFICIENS (227 aa).

In terms of domain architecture, MADS-box spans 3 to 57 (RGKIQIKRIENQTNRQVTYSKRRNGLFKKAHELSVLCDAKVSIIMISSTQKLHEY). The K-box domain maps to 84–174 (YEKMQEHLKK…VLEFDARRED (91 aa)).

The protein localises to the nucleus. Its function is as follows. Transcription factor involved in the genetic control of flower development. Acts in conjunction with GLOBOSA (glo). The polypeptide is Floral homeotic protein DEFICIENS (DEFA) (Antirrhinum majus (Garden snapdragon)).